The sequence spans 277 residues: Digeranylgeranylglyceryl phosphate synthase (277 aa).

7 consecutive transmembrane segments (helical) span residues 16 to 36, 40 to 60, 101 to 121, 129 to 149, 153 to 173, 205 to 225, and 257 to 277; these read ILAG…IPSI, GLVF…NDYF, FLGV…FIYA, FIGN…GALG, VGLA…REIM, IFGV…IGLG, and LKIA…TKGV.

It belongs to the UbiA prenyltransferase family. DGGGP synthase subfamily. The cofactor is Mg(2+).

Its subcellular location is the cell membrane. The catalysed reaction is sn-3-O-(geranylgeranyl)glycerol 1-phosphate + (2E,6E,10E)-geranylgeranyl diphosphate = 2,3-bis-O-(geranylgeranyl)-sn-glycerol 1-phosphate + diphosphate. It functions in the pathway membrane lipid metabolism; glycerophospholipid metabolism. In terms of biological role, prenyltransferase that catalyzes the transfer of the geranylgeranyl moiety of geranylgeranyl diphosphate (GGPP) to the C2 hydroxyl of (S)-3-O-geranylgeranylglyceryl phosphate (GGGP). This reaction is the second ether-bond-formation step in the biosynthesis of archaeal membrane lipids. This is Digeranylgeranylglyceryl phosphate synthase from Pyrococcus abyssi (strain GE5 / Orsay).